Consider the following 200-residue polypeptide: Large ribosomal subunit protein uL4 (200 aa).

The disordered stretch occupies residues 43 to 70; sequence RAQKTRAEVSGSGKKPWRQKGTGRARSG.

The protein belongs to the universal ribosomal protein uL4 family. In terms of assembly, part of the 50S ribosomal subunit.

Its function is as follows. One of the primary rRNA binding proteins, this protein initially binds near the 5'-end of the 23S rRNA. It is important during the early stages of 50S assembly. It makes multiple contacts with different domains of the 23S rRNA in the assembled 50S subunit and ribosome. In terms of biological role, forms part of the polypeptide exit tunnel. The protein is Large ribosomal subunit protein uL4 of Glaesserella parasuis serovar 5 (strain SH0165) (Haemophilus parasuis).